Here is a 173-residue protein sequence, read N- to C-terminus: Shikimate kinase 1 (173 aa).

Position 14–19 (14–19 (GAGKST)) interacts with ATP. Residue Ser18 coordinates Mg(2+). Residues Asp36, Arg60, and Gly82 each coordinate substrate. ATP is bound at residue Arg120. Arg140 serves as a coordination point for substrate. Gln157 lines the ATP pocket.

It belongs to the shikimate kinase family. In terms of assembly, monomer. Requires Mg(2+) as cofactor.

The protein resides in the cytoplasm. It catalyses the reaction shikimate + ATP = 3-phosphoshikimate + ADP + H(+). It participates in metabolic intermediate biosynthesis; chorismate biosynthesis; chorismate from D-erythrose 4-phosphate and phosphoenolpyruvate: step 5/7. Catalyzes the specific phosphorylation of the 3-hydroxyl group of shikimic acid using ATP as a cosubstrate. The sequence is that of Shikimate kinase 1 from Pectobacterium atrosepticum (strain SCRI 1043 / ATCC BAA-672) (Erwinia carotovora subsp. atroseptica).